A 55-amino-acid chain; its full sequence is Large ribosomal subunit protein bL33 (55 aa).

It belongs to the bacterial ribosomal protein bL33 family.

The chain is Large ribosomal subunit protein bL33 from Enterobacter sp. (strain 638).